A 114-amino-acid polypeptide reads, in one-letter code: Peroxisomal biogenesis factor 39 (114 aa).

Disordered regions lie at residues M1–A26 and I53–S114. S102 carries the post-translational modification Phosphoserine.

The protein resides in the peroxisome. May be a peroxin involved in the PTS2-mediated protein import pathway. The protein is Peroxisomal biogenesis factor 39 (Pex39) of Mus musculus (Mouse).